A 333-amino-acid polypeptide reads, in one-letter code: MATLQEKLITPIAAESTTPNNKITVVGVGQVGMACAISILGKGLCDELALVDVWEDKLKGEMMDLQHGSLVLQTHKIVADKDYAVTANSKIVVVTAGVRQQEGESRLNLVQRNVNVFKFIIPQIMKYSPNCTILVVSNPVDILTYVTWKLSGLPKHRVIGSGCNLDSARFRHLMAEKLGIHPTSCHGWILGEHGDSSVAVWSGVNVAGVSLQELNPAMGTDRDSENWKEVHKLVVDSAYEVIKLKGYTNWAIGFSVADLIESMLKNLCRVHPVSTMVKGMYGIENEVFLSLPCVLSASGLTSVINQKLKDEEVAQLKKSADTLWGIQKDLKDL.

Residues 29–57 (GQVG…WEDK) and R99 contribute to the NAD(+) site. R106, N138, and R169 together coordinate substrate. N138 lines the NAD(+) pocket. The active-site Proton acceptor is H193. T248 provides a ligand contact to substrate.

It belongs to the LDH/MDH superfamily. LDH family. As to quaternary structure, homotetramer.

The protein resides in the cytoplasm. It carries out the reaction (S)-lactate + NAD(+) = pyruvate + NADH + H(+). It participates in fermentation; pyruvate fermentation to lactate; (S)-lactate from pyruvate: step 1/1. Functionally, interconverts simultaneously and stereospecifically pyruvate and lactate with concomitant interconversion of NADH and NAD(+). This Trachemys scripta elegans (Red-eared slider turtle) protein is L-lactate dehydrogenase B chain (LDHB).